We begin with the raw amino-acid sequence, 224 residues long: Adenylate kinase (224 aa).

10–15 lines the ATP pocket; that stretch reads GSGKGT. Residues 30 to 59 are NMP; it reads ESGAIFRDNIKGGTDLGMKAKAYIDKGDLV. AMP-binding positions include S31, R36, 57 to 59, 85 to 88, and Q92; these read DLV and GFPR. The tract at residues 126–165 is LID; it reads GRRLCENDNNHPNNIFIDAIKPNGDKCRVCGGALSSRADD. R127 lines the ATP pocket. Residues R162 and R174 each coordinate AMP. N211 contacts ATP.

Belongs to the adenylate kinase family. As to quaternary structure, monomer.

It is found in the cytoplasm. The enzyme catalyses AMP + ATP = 2 ADP. It functions in the pathway purine metabolism; AMP biosynthesis via salvage pathway; AMP from ADP: step 1/1. In terms of biological role, catalyzes the reversible transfer of the terminal phosphate group between ATP and AMP. Plays an important role in cellular energy homeostasis and in adenine nucleotide metabolism. The sequence is that of Adenylate kinase from Desulforapulum autotrophicum (strain ATCC 43914 / DSM 3382 / VKM B-1955 / HRM2) (Desulfobacterium autotrophicum).